We begin with the raw amino-acid sequence, 391 residues long: 23S rRNA (uracil(747)-C(5))-methyltransferase RlmC (391 aa).

[4Fe-4S] cluster is bound by residues C5, C13, C16, and C95. The S-adenosyl-L-methionine site is built by Q220, F249, E276, and N322. Catalysis depends on C349, which acts as the Nucleophile.

The protein belongs to the class I-like SAM-binding methyltransferase superfamily. RNA M5U methyltransferase family. RlmC subfamily.

The enzyme catalyses uridine(747) in 23S rRNA + S-adenosyl-L-methionine = 5-methyluridine(747) in 23S rRNA + S-adenosyl-L-homocysteine + H(+). Its function is as follows. Catalyzes the formation of 5-methyl-uridine at position 747 (m5U747) in 23S rRNA. This is 23S rRNA (uracil(747)-C(5))-methyltransferase RlmC from Actinobacillus pleuropneumoniae serotype 5b (strain L20).